The primary structure comprises 544 residues: Esterase P (544 aa).

The signal sequence occupies residues 1-19 (MSIFKRLLCLTLLWIAALE). A glycan (N-linked (GlcNAc...) asparagine) is linked at asparagine 75. Cysteine 83 and cysteine 102 are joined by a disulfide. N-linked (GlcNAc...) asparagine glycosylation is present at asparagine 114. Serine 206 serves as the catalytic Acyl-ester intermediate. Residues cysteine 258 and cysteine 270 are joined by a disulfide bond. N-linked (GlcNAc...) asparagine glycans are attached at residues asparagine 262 and asparagine 456. Residue histidine 466 is the Charge relay system of the active site. A disulfide bridge connects residues cysteine 514 and cysteine 535.

Belongs to the type-B carboxylesterase/lipase family. In terms of assembly, monomer.

The protein resides in the secreted. The catalysed reaction is a carboxylic ester + H2O = an alcohol + a carboxylate + H(+). The polypeptide is Esterase P (Est-P) (Drosophila melanogaster (Fruit fly)).